The sequence spans 297 residues: Ribosomal protein L11 methyltransferase (297 aa).

Positions 150, 171, 193, and 233 each coordinate S-adenosyl-L-methionine.

It belongs to the methyltransferase superfamily. PrmA family.

The protein localises to the cytoplasm. The enzyme catalyses L-lysyl-[protein] + 3 S-adenosyl-L-methionine = N(6),N(6),N(6)-trimethyl-L-lysyl-[protein] + 3 S-adenosyl-L-homocysteine + 3 H(+). In terms of biological role, methylates ribosomal protein L11. The chain is Ribosomal protein L11 methyltransferase from Laribacter hongkongensis (strain HLHK9).